We begin with the raw amino-acid sequence, 547 residues long: Tripartite motif-containing protein 5 (547 aa).

An N-acetylalanine modification is found at alanine 2. The RING-type zinc-finger motif lies at 15–59 (CPICLELLTEPLSLDCGHSFCQACITANHKESTLHQGERSCPLCR). Phosphoserine is present on serine 86. Residues 91-132 (QKVDRCARHGEKLLLFCQQHGNVICWLCERSQEHRGHSTFLV) form a B box-type zinc finger. Residues cysteine 96, histidine 99, cysteine 118, and histidine 124 each contribute to the Zn(2+) site. The stretch at 132–225 (VEEVAQKYQE…AQSENDMVLQ (94 aa)) forms a coiled coil. Positions 186–199 (FKQLRDILDCEESN) are required for interaction with GABARAP and for autophagy. In terms of domain architecture, B30.2/SPRY spans 280–547 (PDLKGMLQVF…LPMTLCSPSS (268 aa)).

The protein belongs to the TRIM/RBCC family. As to quaternary structure, can form homodimers and homotrimers. In addition to lower-order dimerization, also exhibits a higher-order multimerization and both low- and high-order multimerizations are essential for its restriction activity. Interacts with BTBD1 and BTBD2. Interacts with PSMC4, PSMC5, PSMD7 and HSPA8/HSC70. Interacts (via B30.2/SPRY domain) with HSPA1A/B. Interacts with PSMC2, MAP3K7/TAK1, TAB2 and TAB3. Interacts with SQSTM1. Interacts with TRIM6 and TRIM34. Interacts with ULK1 (phosphorylated form), GABARAP, GABARAPL1, GABARAPL2, MAP1LC3A, MAP1LC3C and BECN1. Post-translationally, degraded in a proteasome-independent fashion in the absence of viral infection but in a proteasome-dependent fashion following exposure to restriction sensitive virus. In terms of processing, autoubiquitinated in a RING finger- and UBE2D2-dependent manner. Monoubiquitinated by TRIM21. Deubiquitinated by Yersinia YopJ. Ubiquitination may not lead to proteasomal degradation.

Its subcellular location is the cytoplasm. It localises to the nucleus. The catalysed reaction is S-ubiquitinyl-[E2 ubiquitin-conjugating enzyme]-L-cysteine + [acceptor protein]-L-lysine = [E2 ubiquitin-conjugating enzyme]-L-cysteine + N(6)-ubiquitinyl-[acceptor protein]-L-lysine.. It functions in the pathway protein modification; protein ubiquitination. Capsid-specific restriction factor that prevents infection from non-host-adapted retroviruses. Blocks viral replication early in the life cycle, after viral entry but before reverse transcription. In addition to acting as a capsid-specific restriction factor, also acts as a pattern recognition receptor that activates innate immune signaling in response to the retroviral capsid lattice. Binding to the viral capsid triggers its E3 ubiquitin ligase activity, and in concert with the heterodimeric ubiquitin conjugating enzyme complex UBE2V1-UBE2N (also known as UBC13-UEV1A complex) generates 'Lys-63'-linked polyubiquitin chains, which in turn are catalysts in the autophosphorylation of the MAP3K7/TAK1 complex (includes TAK1, TAB2, and TAB3). Activation of the MAP3K7/TAK1 complex by autophosphorylation results in the induction and expression of NF-kappa-B and MAPK-responsive inflammatory genes, thereby leading to an innate immune response in the infected cell. Plays a role in regulating autophagy through activation of autophagy regulator BECN1 by causing its dissociation from its inhibitors BCL2 and TAB2. The sequence is that of Tripartite motif-containing protein 5 (TRIM5) from Ateles geoffroyi (Black-handed spider monkey).